We begin with the raw amino-acid sequence, 494 residues long: UDP-N-acetylmuramoyl-L-alanyl-D-glutamate--L-lysine ligase (494 aa).

Serine 30 contacts UDP-N-acetyl-alpha-D-muramoyl-L-alanyl-D-glutamate. 110–116 serves as a coordination point for ATP; that stretch reads GTNGKTS. Residues 152 to 153, serine 179, and arginine 187 each bind UDP-N-acetyl-alpha-D-muramoyl-L-alanyl-D-glutamate; that span reads TT. Lysine 219 bears the N6-carboxylysine mark. The L-lysine recognition motif motif lies at 406 to 409; the sequence is DNPA.

This sequence belongs to the MurCDEF family. MurE subfamily. Post-translationally, carboxylation is probably crucial for Mg(2+) binding and, consequently, for the gamma-phosphate positioning of ATP.

The protein resides in the cytoplasm. The enzyme catalyses UDP-N-acetyl-alpha-D-muramoyl-L-alanyl-D-glutamate + L-lysine + ATP = UDP-N-acetyl-alpha-D-muramoyl-L-alanyl-gamma-D-glutamyl-L-lysine + ADP + phosphate + H(+). The protein operates within cell wall biogenesis; peptidoglycan biosynthesis. Functionally, catalyzes the addition of L-lysine to the nucleotide precursor UDP-N-acetylmuramoyl-L-alanyl-D-glutamate (UMAG) in the biosynthesis of bacterial cell-wall peptidoglycan. This Staphylococcus epidermidis (strain ATCC 35984 / DSM 28319 / BCRC 17069 / CCUG 31568 / BM 3577 / RP62A) protein is UDP-N-acetylmuramoyl-L-alanyl-D-glutamate--L-lysine ligase.